The sequence spans 334 residues: MSNNATTYVVSPAPLKTTSTSSKTTFHFVAGLCSGLTSSILLQPADLLKTRVQQSHKSASLLPTLKTILSSPHPIRSLWRGTLPSALRTGFGSALYFTSLNALRQGIAQTRTPLAIASASSDGKARTSSSALPKLSNWANLATGAIARVAAGFVMMPVTVLKVRYESDYYAYRSLVGAGRDIVRTEGVRGLFSGFGATAARDAPYAGLYVLFYEQLKRRLASVASSEYSEQPLKTSSSSSINFVSGGLAAGLATAITNPFDAVKTRLQLMPGKYGNMMRAVRLMIHEDGVRSLFGGLGLRITRKALSSALAWTVYEELILRAEGHWAEQGKINL.

Solcar repeat units follow at residues 22–106, 135–219, and 237–321; these read SKTT…LRQG, LSNW…LKRR, and SSSS…LILR. 6 helical membrane passes run 28–53, 81–107, 141–166, 194–217, 241–267, and 296–314; these read FVAG…TRVQ, GTLP…RQGI, LATG…VRYE, GFGA…EQLK, INFV…KTRL, and GLGL…AWTV.

This sequence belongs to the mitochondrial carrier (TC 2.A.29) family. SLC25A38 subfamily.

Its subcellular location is the mitochondrion inner membrane. It catalyses the reaction glycine(in) = glycine(out). Its function is as follows. Mitochondrial glycine transporter that imports glycine into the mitochondrial matrix. Plays an important role in providing glycine for the first enzymatic step in heme biosynthesis, the condensation of glycine with succinyl-CoA to produce 5-aminolevulinate (ALA) in the mitochondrial matrix. The polypeptide is Mitochondrial glycine transporter (Aspergillus clavatus (strain ATCC 1007 / CBS 513.65 / DSM 816 / NCTC 3887 / NRRL 1 / QM 1276 / 107)).